The sequence spans 122 residues: Holo-[acyl-carrier-protein] synthase (122 aa).

Mg(2+)-binding residues include Asp8 and Glu55.

The protein belongs to the P-Pant transferase superfamily. AcpS family. The cofactor is Mg(2+).

The protein localises to the cytoplasm. The catalysed reaction is apo-[ACP] + CoA = holo-[ACP] + adenosine 3',5'-bisphosphate + H(+). Transfers the 4'-phosphopantetheine moiety from coenzyme A to a Ser of acyl-carrier-protein. In Fusobacterium nucleatum subsp. nucleatum (strain ATCC 25586 / DSM 15643 / BCRC 10681 / CIP 101130 / JCM 8532 / KCTC 2640 / LMG 13131 / VPI 4355), this protein is Holo-[acyl-carrier-protein] synthase.